Reading from the N-terminus, the 150-residue chain is uncharacterized protein (150 aa).

This is an uncharacterized protein from Methanocaldococcus jannaschii (strain ATCC 43067 / DSM 2661 / JAL-1 / JCM 10045 / NBRC 100440) (Methanococcus jannaschii).